A 521-amino-acid chain; its full sequence is UPF0053 protein BU323 (521 aa).

7 helical membrane passes run 13–33 (LLTL…FVAI), 49–69 (IGLG…SWIV), 80–100 (FFSL…LLFK), 125–145 (FWAV…DAII), 150–170 (MVNQ…LMLL), 185–205 (VVVL…TEAL), and 207–227 (FCIP…IEIF). CBS domains follow at residues 311-370 (MTPR…KIDA) and 374-434 (SSKI…DADE).

It belongs to the UPF0053 family.

It localises to the cell membrane. In Buchnera aphidicola subsp. Acyrthosiphon pisum (strain APS) (Acyrthosiphon pisum symbiotic bacterium), this protein is UPF0053 protein BU323.